The chain runs to 259 residues: Leucine-rich repeat-containing protein 61 (259 aa).

LRR repeat units follow at residues 54-75, 76-97, and 98-119; these read NLEW…ASLR, QLAV…AACE, and NLQS…QCLA. Positions 138–178 constitute an LRRCT domain; sequence NPLCANASYWAVVRELLPGLKVIDGERVSGRGSELYQLCRD.

The protein is Leucine-rich repeat-containing protein 61 (Lrrc61) of Mus musculus (Mouse).